The chain runs to 314 residues: Olfactory receptor 9A4 (314 aa).

The Extracellular portion of the chain corresponds to M1–H24. N-linked (GlcNAc...) asparagine glycosylation is present at N4. Residues I25 to I45 traverse the membrane as a helical segment. The Cytoplasmic portion of the chain corresponds to M46–R53. Residues L54–T74 form a helical membrane-spanning segment. Residues I75–V99 lie on the Extracellular side of the membrane. C97 and C189 are joined by a disulfide. The helical transmembrane segment at Q100–V120 threads the bilayer. At D121 to H139 the chain is on the cytoplasmic side. The helical transmembrane segment at T140 to V160 threads the bilayer. The Extracellular portion of the chain corresponds to Y161–F197. N190 carries an N-linked (GlcNAc...) asparagine glycan. The helical transmembrane segment at I198–S217 threads the bilayer. Topologically, residues N218–S237 are cytoplasmic. The helical transmembrane segment at F238 to L258 threads the bilayer. Topologically, residues Y259–N271 are extracellular. Residues W272–L292 traverse the membrane as a helical segment. Residues R293 to N314 lie on the Cytoplasmic side of the membrane.

The protein belongs to the G-protein coupled receptor 1 family.

The protein localises to the cell membrane. In terms of biological role, odorant receptor. The chain is Olfactory receptor 9A4 (OR9A4) from Homo sapiens (Human).